The sequence spans 198 residues: Cyclin-dependent kinase inhibitor 1B (198 aa).

A compositionally biased stretch (polar residues) spans 1-12; it reads MSNVRVSNGSPT. Positions 1–30 are disordered; sequence MSNVRVSNGSPTSERRDAKQAEYPKPSACR. Serine 10 carries the post-translational modification Phosphoserine; by UHMK1. Basic and acidic residues predominate over residues 13-22; the sequence is SERRDAKQAE. The segment at 51 to 91 is interaction with CDK2; sequence DMEEASQNKWNFDFQNHKPLEGKYEWQEVEKGSLPEFYYRP. Tyrosine 74 carries the post-translational modification Phosphotyrosine; by SRC. Residues 87-198 form a disordered region; sequence FYYRPPRPPK…KKPGLRRRQT (112 aa). Tyrosine 88 is subject to Phosphotyrosine; by ABL, LYN and SRC. Tyrosine 89 bears the Phosphotyrosine mark. Positions 104–113 are enriched in polar residues; the sequence is QESQDVSGTR. Positions 126–137 are enriched in basic and acidic residues; the sequence is EDTHLVDQKTDA. The Nuclear localization signal signature appears at 153 to 169; sequence KRPATDDSSPQNKRANR. A Phosphothreonine; by CaMK1, PKB/AKT1 and PIM1 modification is found at threonine 157. Residue threonine 170 is modified to Phosphothreonine. A compositionally biased stretch (polar residues) spans 175 to 186; sequence SDGSPNAGSVEQ. The residue at position 187 (threonine 187) is a Phosphothreonine; by PKB/AKT1, CDK1 and CDK2. A Phosphothreonine; by CaMK1, PKB/AKT1, RPS6KA1, RPS6KA3 and PIM1 modification is found at threonine 198.

Belongs to the CDI family. As to quaternary structure, forms a ternary complex composed of CCNE1, CDK2 and CDKN1B. Interacts directly with CCNE1; the interaction is inhibited by CDK2-dependent phosphorylation on Thr-187. Interacts with COPS5, subunit of the COP9 signalosome complex; the interaction leads to CDKN1B degradation. Interacts with NUP50; the interaction leads to nuclear import and degradation of phosphorylated CDKN1B. Interacts with CCND1 and SNX6. Interacts (Thr-198-phosphorylated form) with 14-3-3 proteins, binds strongly YWHAQ, weakly YWHAE and YWHAH, but not YWHAB nor YWHAZ; the interaction with YWHAQ results in translocation to the cytoplasm. Interacts with AKT1 and LYN; the interactions lead to cytoplasmic mislocation, phosphorylation of CDKN1B and inhibition of cell cycle arrest. Forms a ternary complex with CCNA2 and CDK2; CDKN1B inhibits the kinase activity of CDK2 through conformational rearrangements. Interacts (unphosphorylated form) with CDK2. Forms a complex with CDK2 and SPDYA, but does not directly interact with SPDYA. Forms a ternary complex composed of cyclin D, CDK4 and CDKN1B. Interacts (phosphorylated on Tyr-88 and Tyr-89) with CDK4; the interaction is required for cyclin D and CDK4 complex assembly, induces nuclear translocation and activates the CDK4 kinase activity. Interacts with GRB2. Interacts with PIM1. Identified in a complex with SKP1, SKP2 and CKS1B. Interacts with UHMK1; the interaction leads to cytoplasmic mislocation, phosphorylation of CDKN1B and inhibition of cell cycle arrest. Also interacts with CDK1. Dephosphorylated on Thr-187 by PPM1H, leading to CDKN1B stability. Phosphorylated; phosphorylation occurs on serine, threonine and tyrosine residues. Phosphorylation on Ser-10 is the major site of phosphorylation in resting cells, takes place at the G(0)-G(1) phase and leads to protein stability. Phosphorylation on other sites is greatly enhanced by mitogens, growth factors, cMYC and in certain cancer cell lines. The phosphorylated form found in the cytoplasm is inactivate. Phosphorylation on Thr-198 is required for interaction with 14-3-3 proteins. Phosphorylation on Thr-187, by CDK1 and CDK2 leads to protein ubiquitination and proteasomal degradation. Tyrosine phosphorylation promotes this process. Phosphorylation by PKB/AKT1 can be suppressed by LY294002, an inhibitor of the catalytic subunit of PI3K. Phosphorylation on Tyr-88 and Tyr-89 has no effect on binding CDK2, but is required for binding CDK4. Dephosphorylated on tyrosine residues by G-CSF. Dephosphorylated on Thr-187 by PPM1H, leading to CDKN1B stability. Post-translationally, ubiquitinated; in the cytoplasm by the KPC complex (composed of RNF123/KPC1 and UBAC1/KPC2) and, in the nucleus, by SCF(SKP2). The latter requires prior phosphorylation on Thr-187. Ubiquitinated; by a TRIM21-containing SCF(SKP2)-like complex; leads to its degradation. In terms of processing, subject to degradation in the lysosome. Interaction with SNX6 promotes lysosomal degradation.

It localises to the nucleus. It is found in the cytoplasm. The protein localises to the endosome. Important regulator of cell cycle progression. Inhibits the kinase activity of CDK2 bound to cyclin A, but has little inhibitory activity on CDK2 bound to SPDYA. Involved in G1 arrest. Potent inhibitor of cyclin E- and cyclin A-CDK2 complexes. Forms a complex with cyclin type D-CDK4 complexes and is involved in the assembly, stability, and modulation of CCND1-CDK4 complex activation. Acts either as an inhibitor or an activator of cyclin type D-CDK4 complexes depending on its phosphorylation state and/or stoichometry. The sequence is that of Cyclin-dependent kinase inhibitor 1B (CDKN1B) from Canis lupus familiaris (Dog).